Reading from the N-terminus, the 164-residue chain is IQ domain-containing protein F2 (164 aa).

IQ domains lie at 43-72 and 99-128; these read RTKA…RAWI and RERA…AIYI.

The protein is IQ domain-containing protein F2 (IQCF2) of Homo sapiens (Human).